The sequence spans 198 residues: Putative undecaprenyl-diphosphatase YbjG (198 aa).

At 1–27 (MLENLNLSLFSLINATPDSAPWMISLA) the chain is on the cytoplasmic side. A helical membrane pass occupies residues 28–48 (IFIAKDLITVVPLLAVVLWLW). Residues 49-57 (GLTAQRQLV) are Periplasmic-facing. The chain crosses the membrane as a helical span at residues 58-78 (IKIAIALAVSLFVSWTMGHLF). The Cytoplasmic segment spans residues 79 to 120 (PHDRPFVENIGYNFLHHAADDSFPSDHGTVIFTFALAFLCWH). A helical membrane pass occupies residues 121 to 143 (RLWSGSLLMVLAVVIAWSRVYLG). Over 144–149 (VHWPLD) the chain is Periplasmic. The helical transmembrane segment at 150–172 (MLGGLLAGMIGCLSAQIIWQAMG) threads the bilayer. At 173–198 (HKLYQRLQSWYRVCFALPIRKGWVRD) the chain is on the cytoplasmic side.

Belongs to the BcrC/YbjG family.

The protein localises to the cell inner membrane. The enzyme catalyses di-trans,octa-cis-undecaprenyl diphosphate + H2O = di-trans,octa-cis-undecaprenyl phosphate + phosphate + H(+). Its function is as follows. Overexpression leads to increased undecaprenyl diphosphatase activity and to increased resistance to bacitracin. May have a preferred substrate other than undecaprenyl diphosphate in vivo. This is Putative undecaprenyl-diphosphatase YbjG (ybjG) from Escherichia coli (strain K12).